We begin with the raw amino-acid sequence, 300 residues long: Geranylgeranyl diphosphate synthase (300 aa).

Lys-50, Arg-53, and His-82 together coordinate isopentenyl diphosphate. Positions 89 and 95 each coordinate Mg(2+). Position 100 (Arg-100) interacts with (2E,6E)-farnesyl diphosphate. Arg-101 is a binding site for isopentenyl diphosphate. (2E,6E)-farnesyl diphosphate contacts are provided by Lys-186, Thr-187, and Gln-224.

This sequence belongs to the FPP/GGPP synthase family. Mg(2+) serves as cofactor.

Its subcellular location is the plastid. It localises to the cyanelle. It carries out the reaction isopentenyl diphosphate + (2E,6E)-farnesyl diphosphate = (2E,6E,10E)-geranylgeranyl diphosphate + diphosphate. It functions in the pathway isoprenoid biosynthesis; geranylgeranyl diphosphate biosynthesis; geranylgeranyl diphosphate from farnesyl diphosphate and isopentenyl diphosphate: step 1/1. Its function is as follows. Catalyzes the condensation of farnesyl diphosphate (FPP) and isopentenyl diphosphate (IPP) to yield geranylgeranyl diphosphate (GGPP) needed for biosynthesis of carotenoids and diterpenes. In Cyanophora paradoxa, this protein is Geranylgeranyl diphosphate synthase (crtE).